Reading from the N-terminus, the 130-residue chain is Large ribosomal subunit protein bL19c (130 aa).

Belongs to the bacterial ribosomal protein bL19 family.

The protein localises to the plastid. It is found in the chloroplast. The sequence is that of Large ribosomal subunit protein bL19c (rpl19) from Chlorella vulgaris (Green alga).